A 72-amino-acid polypeptide reads, in one-letter code: Small, acid-soluble spore protein C (72 aa).

It belongs to the alpha/beta-type SASP family.

Its function is as follows. SASP are bound to spore DNA. They are double-stranded DNA-binding proteins that cause DNA to change to an a-like conformation. They protect the DNA backbone from chemical and enzymatic cleavage and are thus involved in dormant spore's high resistance to UV light. This chain is Small, acid-soluble spore protein C (sspC), found in Bacillus subtilis (strain 168).